Reading from the N-terminus, the 396-residue chain is Phosphopentomutase (396 aa).

Mn(2+) contacts are provided by Asp-13, Asp-288, His-293, Asp-329, His-330, and His-341.

This sequence belongs to the phosphopentomutase family. The cofactor is Mn(2+).

Its subcellular location is the cytoplasm. It catalyses the reaction 2-deoxy-alpha-D-ribose 1-phosphate = 2-deoxy-D-ribose 5-phosphate. The catalysed reaction is alpha-D-ribose 1-phosphate = D-ribose 5-phosphate. It functions in the pathway carbohydrate degradation; 2-deoxy-D-ribose 1-phosphate degradation; D-glyceraldehyde 3-phosphate and acetaldehyde from 2-deoxy-alpha-D-ribose 1-phosphate: step 1/2. Functionally, isomerase that catalyzes the conversion of deoxy-ribose 1-phosphate (dRib-1-P) and ribose 1-phosphate (Rib-1-P) to deoxy-ribose 5-phosphate (dRib-5-P) and ribose 5-phosphate (Rib-5-P), respectively. The sequence is that of Phosphopentomutase from Clostridium perfringens (strain ATCC 13124 / DSM 756 / JCM 1290 / NCIMB 6125 / NCTC 8237 / Type A).